A 381-amino-acid polypeptide reads, in one-letter code: Putative F-box/kelch-repeat protein At1g60570 (381 aa).

An F-box domain is found at 19 to 65 (PTLIPSLPEELILSILARVSRLSYRSLSLVCKRFHSLLTSGEIYRFR). Kelch repeat units follow at residues 126–169 (KIYK…LIDG), 171–218 (IYVT…ERTN), 220–266 (LLVD…VIEN), and 269–314 (YDFF…DYGG).

This chain is Putative F-box/kelch-repeat protein At1g60570, found in Arabidopsis thaliana (Mouse-ear cress).